The sequence spans 1692 residues: Tyrosine-protein phosphatase non-receptor type 23 (1692 aa).

Residues 8–394 (PMIWLDLKEA…AKIEDKNEVL (387 aa)) enclose the BRO1 domain. 2 TPR repeats span residues 250-283 (AVAH…LNEA) and 374-407 (EEKA…DPET). Residues 552–639 (KAVLQNLKRI…RALTEANVQY (88 aa)) are a coiled coil. Disordered regions lie at residues 711–788 (DREL…PATH), 884–923 (DSVQ…PQPQ), and 944–1199 (TYSI…LLQP). Residue T744 is modified to Phosphothreonine. The his stretch occupies residues 773–1186 (HFSPGPFPSS…SSSPESQHGG (414 aa)). Residues 774-785 (FSPGPFPSSTGP) show a composition bias toward low complexity. Residues 884–894 (DSVQAPISSHT) show a composition bias toward polar residues. Positions 897-923 (RPNPTPALPQPCFPVPQPVPQSVPQPQ) are enriched in pro residues. R974 carries the omega-N-methylarginine modification. Repeat copies occupy residues 977–978 (PQ), 979–980 (AQ), 981–982 (AQ), 983–984 (PQ), 985–986 (PQ), 987–988 (PQ), 989–990 (PQ), 991–992 (PQ), 993–994 (PQ), 995–996 (PQ), 997–998 (PQ), 999–1000 (PQ), 1001–1002 (PQ), 1003–1004 (PQ), 1005–1006 (SQ), 1007–1008 (SQ), 1009–1010 (PQ), 1011–1012 (PQ), 1013–1014 (PQ), 1015–1016 (PQ), and 1017–1018 (PQ). The 21 X 2 AA approximate tandem repeats of P-Q stretch occupies residues 977-1018 (PQAQAQPQPQPQPQPQPQPQPQPQPQPQSQSQPQPQPQPQPQ). A compositionally biased stretch (pro residues) spans 984–1002 (QPQPQPQPQPQPQPQPQPQ). Pro residues-rich tracts occupy residues 1093 to 1102 (FPSPGPPHPH) and 1127 to 1165 (GPPP…PPPC). S1178 and S1179 each carry phosphoserine. T1187 carries the phosphothreonine modification. The Tyrosine-protein phosphatase domain maps to 1248 to 1508 (DAIWRELQEA…KFCHEALVRH (261 aa)). C1448 (phosphocysteine intermediate) is an active-site residue. Positions 1574–1638 (ASLPGLVEPP…PSSSLELLAS (65 aa)) are disordered. Residues 1598–1612 (SSSPPPLSSPLPEAP) show a composition bias toward pro residues. Over residues 1620–1638 (VPEAPSLGPPSSSLELLAS) the composition is skewed to low complexity. An Omega-N-methylarginine modification is found at R1671.

Belongs to the protein-tyrosine phosphatase family. Non-receptor class subfamily. Interacts with GRAP2 and GRB2. Interacts with UBAP1 and CHMP4B.

The protein localises to the nucleus. It localises to the cytoplasm. The protein resides in the cytoplasmic vesicle. It is found in the endosome. Its subcellular location is the cytoskeleton. The protein localises to the cilium basal body. It catalyses the reaction O-phospho-L-tyrosyl-[protein] + H2O = L-tyrosyl-[protein] + phosphate. Functionally, plays a role in sorting of endocytic ubiquitinated cargos into multivesicular bodies (MVBs) via its interaction with the ESCRT-I complex (endosomal sorting complex required for transport I), and possibly also other ESCRT complexes. May act as a negative regulator of Ras-mediated mitogenic activity. Plays a role in ciliogenesis. The polypeptide is Tyrosine-protein phosphatase non-receptor type 23 (Ptpn23) (Mus musculus (Mouse)).